We begin with the raw amino-acid sequence, 807 residues long: Leucine--tRNA ligase (807 aa).

The short motif at Pro40–His51 is the 'HIGH' region element. A 'KMSKS' region motif is present at residues Lys576–Ser580. Lys579 is an ATP binding site.

This sequence belongs to the class-I aminoacyl-tRNA synthetase family.

The protein resides in the cytoplasm. The catalysed reaction is tRNA(Leu) + L-leucine + ATP = L-leucyl-tRNA(Leu) + AMP + diphosphate. The chain is Leucine--tRNA ligase from Pelodictyon phaeoclathratiforme (strain DSM 5477 / BU-1).